The primary structure comprises 397 residues: Chorismate synthase (397 aa).

Residues Arg40 and Arg46 each contribute to the NADP(+) site. Residues 129 to 131, 257 to 258, Gly302, 317 to 321, and Arg343 contribute to the FMN site; these read RSS, QA, and KPISS.

It belongs to the chorismate synthase family. In terms of assembly, homotetramer. It depends on FMNH2 as a cofactor.

The catalysed reaction is 5-O-(1-carboxyvinyl)-3-phosphoshikimate = chorismate + phosphate. It participates in metabolic intermediate biosynthesis; chorismate biosynthesis; chorismate from D-erythrose 4-phosphate and phosphoenolpyruvate: step 7/7. Its function is as follows. Catalyzes the anti-1,4-elimination of the C-3 phosphate and the C-6 proR hydrogen from 5-enolpyruvylshikimate-3-phosphate (EPSP) to yield chorismate, which is the branch point compound that serves as the starting substrate for the three terminal pathways of aromatic amino acid biosynthesis. This reaction introduces a second double bond into the aromatic ring system. In Chlorobium luteolum (strain DSM 273 / BCRC 81028 / 2530) (Pelodictyon luteolum), this protein is Chorismate synthase.